Consider the following 306-residue polypeptide: Recombination-associated protein RdgC (306 aa).

The protein belongs to the RdgC family.

It localises to the cytoplasm. The protein localises to the nucleoid. Its function is as follows. May be involved in recombination. This is Recombination-associated protein RdgC from Pseudomonas paraeruginosa (strain DSM 24068 / PA7) (Pseudomonas aeruginosa (strain PA7)).